The sequence spans 365 residues: Zinc finger protein lsy-2 (365 aa).

Positions 1–36 are disordered; sequence MLTRRNAKQSQRNSADQSLSEFNSSSMTHGSNQSVY. Residues 8-36 are compositionally biased toward polar residues; the sequence is KQSQRNSADQSLSEFNSSSMTHGSNQSVY. 5 C2H2-type zinc fingers span residues 78–100, 106–128, 134–156, 264–287, and 296–318; these read HQCN…AVIH, FRCD…RSVH, HACP…LRTH, HDCP…TLEH, and FFCE…MSYH.

Its subcellular location is the nucleus speckle. In terms of biological role, involved in transcriptional regulation. Required to specify left-right asymmetry of the ASE gustatory neurons, probably acting upstream of microRNA lsy-6. Involved in maintaining the distinction between somatic and germ cells, perhaps acting by repressing germ cell-specific genes in somatic cells. This is Zinc finger protein lsy-2 from Caenorhabditis elegans.